Consider the following 847-residue polypeptide: MGSKPNAMKNVVAMAAVSALFLLGFLVCSVSGSVSYDSRAITINGKRRILISGSIHYPRSTPEMWPDLIRKAKEGGLDVIQTYVFWNGHEPSPGKYYFEGNYDLVKFVKLVQQSGLYLHLRIGPYVCAEWNFGGFPVWLKYIPGISFRTDNGPFKAQMQRFTTKIVNMMKAERLFESQGGPIILSQIENEYGPMEYELGAPGRSYTNWAAKMAVGLGTGVPWVMCKQDDAPDPIINACNGFYCDYFSPNKAYKPKMWTEAWTGWFTKFGGPVPYRPAEDMAFSVARFIQKGGSFINYYMYHGGTNFGRTAGGPFIATSYDYDAPLDEYGLERQPKWGHLKDLHRAIKLCEPALVSGEPTRMPLGNYQEAHVYKSKSGACSAFLANYNPKSYAKVSFGNNHYNLPPWSISILPDCKNTVYNTARVGAQTSRMKMVRVPVHGGLSWQAYNEDPSTYIDESFTMVGLVEQINTTRDTSDYLWYMTDVKVDANEGFLRNGDLPTLTVLSAGHAMHVFINGQLSGSAYGSLDSPKLTFRKGVNLRAGFNKIAILSIAVGLPNVGPHFETWNAGVLGPVSLNGLNGGRRDLSWQKWTYKVGLKGESLSLHSLSGSSSVEWAEGAFVAQKQPLTWYKTTFSAPAGDSPLAVDMGSMGKGQIWINGQSLGRHWPAYKAVGSCSECSYTGTFREDKCLRNCGEASQRWYHVPRSWLKPSGNLLVVFEEWGGDPNGITLVRREVDSVCADIYEWQSTLVNYQLHASGKVNKPLHPKAHLQCGPGQKITTVKFASFGTPEGTCGSYRQGSCHAHHSYDAFNKLCVGQNWCSVTVAPEMFGGDPCPNVMKKLAVEAVCA.

Positions 1-32 (MGSKPNAMKNVVAMAAVSALFLLGFLVCSVSG) are cleaved as a signal peptide. Glu-190 acts as the Proton donor in catalysis. The Nucleophile role is filled by Glu-259. N-linked (GlcNAc...) asparagine glycosylation occurs at Asn-469. The region spanning 761–847 (KPLHPKAHLQ…KKLAVEAVCA (87 aa)) is the SUEL-type lectin domain.

The protein belongs to the glycosyl hydrolase 35 family. As to expression, ubiquitous, at low levels.

The protein resides in the secreted. Its subcellular location is the extracellular space. The protein localises to the apoplast. It catalyses the reaction Hydrolysis of terminal non-reducing beta-D-galactose residues in beta-D-galactosides.. This is Beta-galactosidase 1 (BGAL1) from Arabidopsis thaliana (Mouse-ear cress).